Here is a 194-residue protein sequence, read N- to C-terminus: CASP-like protein 4C1 (194 aa).

Residues 1-35 (MRSPHAFRNGESPTLRDHTHFHSTVTAQKLRRFNS) are Cytoplasmic-facing. The chain crosses the membrane as a helical span at residues 36 to 56 (LILLLRLASFSFSLASAVFML). Topologically, residues 57–74 (TNSRGSASPHWYDFDAFR) are extracellular. The helical transmembrane segment at 75–95 (FVFVANAIVALYSVFEMGTCV) threads the bilayer. The Cytoplasmic portion of the chain corresponds to 96 to 114 (WEFSRETTLWPEAFQVWFD). The helical transmembrane segment at 115–135 (FGHDQVFSYLLLSAGSAAAAL) threads the bilayer. Over 136 to 157 (ARTMRGGDTCTANKAFCLQSDV) the chain is Extracellular. Residues 158-178 (AIGLGFAAFLFLAFSSCFSGF) form a helical membrane-spanning segment. At 179 to 194 (RVACFLITGSRFHLYS) the chain is on the cytoplasmic side.

The protein belongs to the Casparian strip membrane proteins (CASP) family. Homodimer and heterodimers.

It localises to the cell membrane. This is CASP-like protein 4C1 from Arabidopsis thaliana (Mouse-ear cress).